The following is a 444-amino-acid chain: Tol-Pal system protein TolB (444 aa).

The signal sequence occupies residues 1-19 (MRNIIYFILSLLFSVTSYA).

It belongs to the TolB family. As to quaternary structure, the Tol-Pal system is composed of five core proteins: the inner membrane proteins TolA, TolQ and TolR, the periplasmic protein TolB and the outer membrane protein Pal. They form a network linking the inner and outer membranes and the peptidoglycan layer.

The protein resides in the periplasm. Functionally, part of the Tol-Pal system, which plays a role in outer membrane invagination during cell division and is important for maintaining outer membrane integrity. This is Tol-Pal system protein TolB from Rickettsia rickettsii (strain Iowa).